The chain runs to 146 residues: Small ribosomal subunit protein uS9 (146 aa).

It belongs to the universal ribosomal protein uS9 family. Component of the small ribosomal subunit.

It is found in the cytoplasm. Its function is as follows. Component of the small ribosomal subunit. The ribosome is a large ribonucleoprotein complex responsible for the synthesis of proteins in the cell. This is Small ribosomal subunit protein uS9 (rps16) from Ictalurus punctatus (Channel catfish).